The sequence spans 873 residues: Leucine--tRNA ligase (873 aa).

A 'HIGH' region motif is present at residues Pro-42–His-52. A 'KMSKS' region motif is present at residues Lys-628 to Ser-632. Residue Lys-631 participates in ATP binding.

This sequence belongs to the class-I aminoacyl-tRNA synthetase family.

It is found in the cytoplasm. It carries out the reaction tRNA(Leu) + L-leucine + ATP = L-leucyl-tRNA(Leu) + AMP + diphosphate. The protein is Leucine--tRNA ligase of Aromatoleum aromaticum (strain DSM 19018 / LMG 30748 / EbN1) (Azoarcus sp. (strain EbN1)).